The primary structure comprises 504 residues: Maturase K (504 aa).

Belongs to the intron maturase 2 family. MatK subfamily.

It localises to the plastid. The protein localises to the chloroplast. Functionally, usually encoded in the trnK tRNA gene intron. Probably assists in splicing its own and other chloroplast group II introns. The sequence is that of Maturase K from Fagus hayatae (Formosan elm).